The sequence spans 250 residues: NAD-dependent protein deacetylase (250 aa).

A Deacetylase sirtuin-type domain is found at 1–244 (MECDKVGDLL…PCVVDYIKSQ (244 aa)). NAD(+) is bound by residues A22, T26, F33, R34, Q98, I100, D101, and H116. F33 contacts nicotinamide. The nicotinamide site is built by I100 and D101. Catalysis depends on H116, which acts as the Proton acceptor. C124, C127, C149, and C151 together coordinate Zn(2+). Residues S187, S188, N212, and V230 each contribute to the NAD(+) site.

The protein belongs to the sirtuin family. Class U subfamily. Zn(2+) serves as cofactor.

The protein localises to the cytoplasm. It catalyses the reaction N(6)-acetyl-L-lysyl-[protein] + NAD(+) + H2O = 2''-O-acetyl-ADP-D-ribose + nicotinamide + L-lysyl-[protein]. Its function is as follows. NAD-dependent protein deacetylase which modulates the activities of several enzymes which are inactive in their acetylated form. Deacetylates the N-terminal lysine residue of Alba, the major archaeal chromatin protein and that, in turn, increases Alba's DNA binding affinity, thereby repressing transcription. This chain is NAD-dependent protein deacetylase, found in Sulfurisphaera tokodaii (strain DSM 16993 / JCM 10545 / NBRC 100140 / 7) (Sulfolobus tokodaii).